We begin with the raw amino-acid sequence, 230 residues long: MENQPKLNSTKEVIAFLAERFPLCFSAEGEARPLKIGIFQDLVERVQGEMSLSKTQLRSALRLYTSSWRYLYGIKAGAIRVDLDGNACGQLDEQHVEHARKQLEEAKARVQAQREQHQAKKREAGEATAPRRPRKPARKPAAEGEQSRSVSGKPSRPQAARPASAPRAESRVEQRKPVTDTTALQVGQSIKVTAGKNAMDATILEISKDGVRVQLASGLAMIVRAEHLQF.

The span at 105–125 (EAKARVQAQREQHQAKKREAG) shows a compositional bias: basic and acidic residues. The interval 105-182 (EAKARVQAQR…EQRKPVTDTT (78 aa)) is disordered. Positions 154 to 167 (PSRPQAARPASAPR) are enriched in low complexity. Basic and acidic residues predominate over residues 168-178 (AESRVEQRKPV).

Belongs to the ProQ family.

Its subcellular location is the cytoplasm. Its function is as follows. RNA chaperone with significant RNA binding, RNA strand exchange and RNA duplexing activities. May regulate ProP activity through an RNA-based, post-transcriptional mechanism. The sequence is that of RNA chaperone ProQ from Erwinia tasmaniensis (strain DSM 17950 / CFBP 7177 / CIP 109463 / NCPPB 4357 / Et1/99).